A 217-amino-acid chain; its full sequence is THAP domain-containing protein 2 (217 aa).

Residues 1 to 80 (MPTNCAAAGC…LKMDAVPTIF (80 aa)) form a THAP-type zinc finger. An HCFC1-binding motif (HBM) motif is present at residues 122–125 (EHSY).

This is THAP domain-containing protein 2 (Thap2) from Mus musculus (Mouse).